A 221-amino-acid chain; its full sequence is Succinate--CoA ligase [ADP-forming] subunit beta, mitochondrial (221 aa).

One can recognise an ATP-grasp domain in the interval 1 to 122 (DVVIKAQVLA…DSNSAYRQKI (122 aa)). Lys-5 is an ATP binding site. Lys-22 and Lys-26 each carry N6-acetyllysine. Phosphoserine is present on Ser-114. Thr-139 carries the phosphothreonine modification. 171 to 173 (GIM) is a binding site for substrate. Residue Lys-196 is modified to N6-acetyllysine.

It belongs to the succinate/malate CoA ligase beta subunit family. ATP-specific subunit beta subfamily. Heterodimer of an alpha and a beta subunit. The beta subunit determines specificity for ATP. Interacts with ALAS2.

It localises to the mitochondrion. It carries out the reaction succinate + ATP + CoA = succinyl-CoA + ADP + phosphate. The protein operates within carbohydrate metabolism; tricarboxylic acid cycle; succinate from succinyl-CoA (ligase route): step 1/1. ATP-specific succinyl-CoA synthetase functions in the citric acid cycle (TCA), coupling the hydrolysis of succinyl-CoA to the synthesis of ATP and thus represents the only step of substrate-level phosphorylation in the TCA. The beta subunit provides nucleotide specificity of the enzyme and binds the substrate succinate, while the binding sites for coenzyme A and phosphate are found in the alpha subunit. This Mesocricetus auratus (Golden hamster) protein is Succinate--CoA ligase [ADP-forming] subunit beta, mitochondrial.